The primary structure comprises 948 residues: Phosphoenolpyruvate carboxylase (948 aa).

Residues His138 and Lys610 contribute to the active site.

It belongs to the PEPCase type 1 family. It depends on Mg(2+) as a cofactor.

The enzyme catalyses oxaloacetate + phosphate = phosphoenolpyruvate + hydrogencarbonate. In terms of biological role, forms oxaloacetate, a four-carbon dicarboxylic acid source for the tricarboxylic acid cycle. This chain is Phosphoenolpyruvate carboxylase, found in Streptococcus gordonii (strain Challis / ATCC 35105 / BCRC 15272 / CH1 / DL1 / V288).